The following is a 137-amino-acid chain: Acidic phospholipase A2 beta-bungarotoxin A6 chain (137 aa).

Residues 1 to 9 (AVCVSLLGA) form the signal peptide. A propeptide spanning residues 10-17 (ANIPPQHL) is cleaved from the precursor. Disulfide bonds link C44–C136, C46–C62, C61–C117, C68–C110, C78–C103, and C96–C108. Ca(2+) contacts are provided by Y45, G47, and G49. Residue H65 is part of the active site. D66 lines the Ca(2+) pocket. D111 is an active-site residue.

Belongs to the phospholipase A2 family. Group I subfamily. D49 sub-subfamily. Heterodimer; disulfide-linked. The A chains have phospholipase A2 activity and the B chains show homology with the basic protease inhibitors. Requires Ca(2+) as cofactor. Expressed by the venom gland.

The protein localises to the secreted. The enzyme catalyses a 1,2-diacyl-sn-glycero-3-phosphocholine + H2O = a 1-acyl-sn-glycero-3-phosphocholine + a fatty acid + H(+). Snake venom phospholipase A2 (PLA2) that inhibits neuromuscular transmission by blocking acetylcholine release from the nerve termini. PLA2 catalyzes the calcium-dependent hydrolysis of the 2-acyl groups in 3-sn-phosphoglycerides. This Bungarus multicinctus (Many-banded krait) protein is Acidic phospholipase A2 beta-bungarotoxin A6 chain.